The primary structure comprises 358 residues: Probable dual-specificity RNA methyltransferase RlmN 1 (358 aa).

The 226-residue stretch at 101–326 (MQAGGTLCIS…REKGFYTLLR (226 aa)) folds into the Radical SAM core domain. Cys-108 and Cys-337 are disulfide-bonded. The [4Fe-4S] cluster site is built by Cys-115, Cys-119, and Cys-122. S-adenosyl-L-methionine contacts are provided by residues 162–163 (GE), Ser-194, 218–220 (SLN), and Asn-294. The active-site S-methylcysteine intermediate is Cys-337.

Belongs to the radical SAM superfamily. RlmN family. The cofactor is [4Fe-4S] cluster.

Its subcellular location is the cytoplasm. It carries out the reaction adenosine(2503) in 23S rRNA + 2 reduced [2Fe-2S]-[ferredoxin] + 2 S-adenosyl-L-methionine = 2-methyladenosine(2503) in 23S rRNA + 5'-deoxyadenosine + L-methionine + 2 oxidized [2Fe-2S]-[ferredoxin] + S-adenosyl-L-homocysteine. The enzyme catalyses adenosine(37) in tRNA + 2 reduced [2Fe-2S]-[ferredoxin] + 2 S-adenosyl-L-methionine = 2-methyladenosine(37) in tRNA + 5'-deoxyadenosine + L-methionine + 2 oxidized [2Fe-2S]-[ferredoxin] + S-adenosyl-L-homocysteine. Functionally, specifically methylates position 2 of adenine 2503 in 23S rRNA and position 2 of adenine 37 in tRNAs. The protein is Probable dual-specificity RNA methyltransferase RlmN 1 of Protochlamydia amoebophila (strain UWE25).